We begin with the raw amino-acid sequence, 114 residues long: UPF0757 protein YmgG (114 aa).

This sequence belongs to the UPF0757 family.

The protein is UPF0757 protein YmgG of Shigella flexneri.